Consider the following 546-residue polypeptide: Chaperonin GroEL (546 aa).

ATP-binding positions include 30–33 (TLGP), Lys51, 87–91 (DGTTT), Gly415, 479–481 (NAA), and Asp495. The segment at 527–546 (EEKPDVSASSGGMGGMGGMM) is disordered. Gly residues predominate over residues 537 to 546 (GGMGGMGGMM).

It belongs to the chaperonin (HSP60) family. As to quaternary structure, forms a cylinder of 14 subunits composed of two heptameric rings stacked back-to-back. Interacts with the co-chaperonin GroES.

Its subcellular location is the cytoplasm. It catalyses the reaction ATP + H2O + a folded polypeptide = ADP + phosphate + an unfolded polypeptide.. Together with its co-chaperonin GroES, plays an essential role in assisting protein folding. The GroEL-GroES system forms a nano-cage that allows encapsulation of the non-native substrate proteins and provides a physical environment optimized to promote and accelerate protein folding. The protein is Chaperonin GroEL of Baumannia cicadellinicola subsp. Homalodisca coagulata.